The following is a 255-amino-acid chain: MSLDLSTSLSPARPLESADAMEERLREIGAARYHDRHPFHHMLHGGELTKGQVQAWALNRYYYQCTIPVKDAVVISRFRDRATRIEWRHRLEDHDGAEGAEGGIDRWLILTDGLGLDRAYVESTEGILPATRFAVEAYVHFVRDRSPLEAIASCLTELFAPNIHATRISGMLSHYDFINPTVMAYFQRRLTQAPRDADYALRYVRDHARTPEERAAVCNALIFKTQVLWTQLDALHHAYVLGHVPPGAFVPEEMR.

The protein belongs to the PqqC family.

The enzyme catalyses 6-(2-amino-2-carboxyethyl)-7,8-dioxo-1,2,3,4,7,8-hexahydroquinoline-2,4-dicarboxylate + 3 O2 = pyrroloquinoline quinone + 2 H2O2 + 2 H2O + H(+). It functions in the pathway cofactor biosynthesis; pyrroloquinoline quinone biosynthesis. Functionally, ring cyclization and eight-electron oxidation of 3a-(2-amino-2-carboxyethyl)-4,5-dioxo-4,5,6,7,8,9-hexahydroquinoline-7,9-dicarboxylic-acid to PQQ. This Cereibacter sphaeroides (strain ATCC 17023 / DSM 158 / JCM 6121 / CCUG 31486 / LMG 2827 / NBRC 12203 / NCIMB 8253 / ATH 2.4.1.) (Rhodobacter sphaeroides) protein is Pyrroloquinoline-quinone synthase.